The chain runs to 185 residues: Urease accessory protein UreE (185 aa).

Positions 153–185 (LRANSAQGHGHSHSHSHDHHGYHHHGDGNWHKH) are disordered. Over residues 162-175 (GHSHSHSHDHHGYH) the composition is skewed to basic residues. Residues 176-185 (HHGDGNWHKH) are compositionally biased toward basic and acidic residues.

This sequence belongs to the UreE family.

Its subcellular location is the cytoplasm. Involved in urease metallocenter assembly. Binds nickel. Probably functions as a nickel donor during metallocenter assembly. The polypeptide is Urease accessory protein UreE (Haemophilus influenzae (strain PittGG)).